The sequence spans 92 residues: DNA-directed RNA polymerase subunit Rpo11 (92 aa).

Belongs to the archaeal Rpo11/eukaryotic RPB11/RPC19 RNA polymerase subunit family. Part of the RNA polymerase complex.

It localises to the cytoplasm. It catalyses the reaction RNA(n) + a ribonucleoside 5'-triphosphate = RNA(n+1) + diphosphate. DNA-dependent RNA polymerase (RNAP) catalyzes the transcription of DNA into RNA using the four ribonucleoside triphosphates as substrates. In Methanosarcina mazei (strain ATCC BAA-159 / DSM 3647 / Goe1 / Go1 / JCM 11833 / OCM 88) (Methanosarcina frisia), this protein is DNA-directed RNA polymerase subunit Rpo11.